A 565-amino-acid polypeptide reads, in one-letter code: MTTREFDYIICGAGSAGNVLATRLTEDPGVTVLLLEAGGPDYRFDFRTQMPAALAYPLQGRRYNWAYETDPEPHMNHRRMECGRGKGLGGSSLINGMCYIRGNALDYDNWATHKALEDWAYLDCLPYFRKAETRDVGPNDYHGGDGPVSVTTSKPGVNPLFEAMVEAGVQAGYPRTDDLNGYQQEGFGPMDRTVTPRGRRASTARGYLDQARARPNLEIVTHALADRILFSGKRATGVTFLHGSARVTAHARREVLVCSGAIASPQLLQRSGVGPGEWLRELDIPVVLDLPGVGRNLQDHLEMYIQFECKEPVSLYPALKWWNQPKIGLEWMLNGTGLGASNHFEAGGFIRTRDDDPWPNIQYHFLPVAINYNGSNAIEMHGFQAHVGSMRSPSRGRVKLKSRDPHAHPSILFNYMAEALDWREFRDAIRATREIMRQPALDRFRGRELNPGADLKSDNELDTFVRARAETAFHPSCSCKMGYDDMAVVDNEGRVHGIDGLRVVDASIMPIITTGNLNAPTIMIAEKIADRIRQHKPLERSNAQYYVANGAPARGGKPARAPAVV.

7–36 (DYIICGAGSAGNVLATRLTEDPGVTVLLLE) contacts FAD. His474 (proton acceptor) is an active-site residue.

Belongs to the GMC oxidoreductase family. FAD is required as a cofactor.

It catalyses the reaction choline + A = betaine aldehyde + AH2. It carries out the reaction betaine aldehyde + NAD(+) + H2O = glycine betaine + NADH + 2 H(+). Its pathway is amine and polyamine biosynthesis; betaine biosynthesis via choline pathway; betaine aldehyde from choline (cytochrome c reductase route): step 1/1. Functionally, involved in the biosynthesis of the osmoprotectant glycine betaine. Catalyzes the oxidation of choline to betaine aldehyde and betaine aldehyde to glycine betaine at the same rate. This Burkholderia pseudomallei (strain K96243) protein is Oxygen-dependent choline dehydrogenase.